The sequence spans 231 residues: UPF0758 protein pc1765 (231 aa).

One can recognise an MPN domain in the interval 107-229; sequence LIEHSSHAYQ…YVSFKDQNLL (123 aa). Zn(2+) is bound by residues histidine 178, histidine 180, and aspartate 191. A JAMM motif motif is present at residues 178 to 191; that stretch reads HNHPSGDPMPSNQD.

It belongs to the UPF0758 family.

In Protochlamydia amoebophila (strain UWE25), this protein is UPF0758 protein pc1765.